A 201-amino-acid polypeptide reads, in one-letter code: Small ribosomal subunit protein uS4B (201 aa).

Residues 93–156 (QRLDTVVYRL…RSLAVVRESL (64 aa)) form the S4 RNA-binding domain.

Belongs to the universal ribosomal protein uS4 family. Part of the 30S ribosomal subunit. Contacts protein S5. The interaction surface between S4 and S5 is involved in control of translational fidelity.

Its function is as follows. One of the primary rRNA binding proteins, it binds directly to 16S rRNA where it nucleates assembly of the body of the 30S subunit. With S5 and S12 plays an important role in translational accuracy. This Symbiobacterium thermophilum (strain DSM 24528 / JCM 14929 / IAM 14863 / T) protein is Small ribosomal subunit protein uS4B.